We begin with the raw amino-acid sequence, 345 residues long: Phosphoribosylformylglycinamidine cyclo-ligase (345 aa).

This sequence belongs to the AIR synthase family.

It is found in the cytoplasm. The enzyme catalyses 2-formamido-N(1)-(5-O-phospho-beta-D-ribosyl)acetamidine + ATP = 5-amino-1-(5-phospho-beta-D-ribosyl)imidazole + ADP + phosphate + H(+). It functions in the pathway purine metabolism; IMP biosynthesis via de novo pathway; 5-amino-1-(5-phospho-D-ribosyl)imidazole from N(2)-formyl-N(1)-(5-phospho-D-ribosyl)glycinamide: step 2/2. The polypeptide is Phosphoribosylformylglycinamidine cyclo-ligase (Escherichia coli O6:K15:H31 (strain 536 / UPEC)).